A 520-amino-acid polypeptide reads, in one-letter code: DNA-(apurinic or apyrimidinic site) endonuclease 2 (520 aa).

E59 provides a ligand contact to Mg(2+). Y181 is an active-site residue. D222, N224, and D353 together coordinate Mg(2+). D222 acts as the Proton donor/acceptor in catalysis. 4 residues coordinate Zn(2+): C476, H478, C500, and C514. The segment at 476-520 (CRHGEESMLKTSKTSANPGRKFWICKRSRGDSNNTESSCGFFQWV) adopts a GRF-type zinc-finger fold.

This sequence belongs to the DNA repair enzymes AP/ExoA family. Requires Mg(2+) as cofactor. Mn(2+) serves as cofactor.

It localises to the nucleus. It catalyses the reaction Exonucleolytic cleavage in the 3'- to 5'-direction to yield nucleoside 5'-phosphates.. Functionally, DNA repair enzyme that cleaves apurinic/apyrimidinic (AP) sites and removes 3'-blocking groups present at single strand breaks of damaged DNA. The chain is DNA-(apurinic or apyrimidinic site) endonuclease 2 (APN2) from Saccharomyces cerevisiae (strain ATCC 204508 / S288c) (Baker's yeast).